Reading from the N-terminus, the 175-residue chain is NADH-ubiquinone oxidoreductase chain 6 (175 aa).

Helical transmembrane passes span 1–21 (MMLY…VGFS), 25–45 (SPIY…GIVL), 47–67 (FGGS…MMVV), 88–108 (AVLG…YYVL), and 149–169 (YGTW…VVIM).

Belongs to the complex I subunit 6 family. In terms of assembly, core subunit of respiratory chain NADH dehydrogenase (Complex I) which is composed of 45 different subunits.

The protein resides in the mitochondrion inner membrane. The enzyme catalyses a ubiquinone + NADH + 5 H(+)(in) = a ubiquinol + NAD(+) + 4 H(+)(out). In terms of biological role, core subunit of the mitochondrial membrane respiratory chain NADH dehydrogenase (Complex I) which catalyzes electron transfer from NADH through the respiratory chain, using ubiquinone as an electron acceptor. Essential for the catalytic activity and assembly of complex I. This is NADH-ubiquinone oxidoreductase chain 6 (MT-ND6) from Bos mutus grunniens (Wild yak).